The chain runs to 285 residues: Tetraspanin-3 (285 aa).

Residues 1 to 6 (MRTSNH) are Cytoplasmic-facing. Residues 7–27 (LIGLVNFLTFLLSIPILGGGI) form a helical membrane-spanning segment. The Extracellular segment spans residues 28–43 (WLSSRANSTDCLRFLQ). Asn-34 is a glycosylation site (N-linked (GlcNAc...) asparagine). A helical membrane pass occupies residues 44 to 64 (WPLIVIGISIMVVSLAGFAGA). At 65-71 (CYRNKFL) the chain is on the cytoplasmic side. The helical transmembrane segment at 72–92 (MWLYLVVMLLIIAALIGFIIF) threads the bilayer. Residues 93–235 (AYAVTDKGSG…LGSLKKSWRK (143 aa)) are Extracellular-facing. Asn-187 carries an N-linked (GlcNAc...) asparagine glycan. The chain crosses the membrane as a helical span at residues 236–256 (VSVINIVVLIILVIFYVIAYA). The Cytoplasmic segment spans residues 257-285 (AYRNVKRIDNDEPAGEARMTKSHPSHFHL).

It belongs to the tetraspanin (TM4SF) family.

It is found in the cell membrane. May be involved in the regulation of cell differentiation. The chain is Tetraspanin-3 (TET3) from Arabidopsis thaliana (Mouse-ear cress).